Reading from the N-terminus, the 122-residue chain is Large ribosomal subunit protein uL14 (122 aa).

This sequence belongs to the universal ribosomal protein uL14 family. In terms of assembly, part of the 50S ribosomal subunit. Forms a cluster with proteins L3 and L19. In the 70S ribosome, L14 and L19 interact and together make contacts with the 16S rRNA in bridges B5 and B8.

Functionally, binds to 23S rRNA. Forms part of two intersubunit bridges in the 70S ribosome. This is Large ribosomal subunit protein uL14 from Chlorobium phaeovibrioides (strain DSM 265 / 1930) (Prosthecochloris vibrioformis (strain DSM 265)).